The primary structure comprises 536 residues: Chlorophyllide a oxygenase, chloroplastic (536 aa).

A chloroplast-targeting transit peptide spans 1 to 36 (MNAAVFSPSALSLPISFSKTRSSFLSRKKGVKGEFR). Positions 123–150 (IGTVKKELAGLQEELSKAHQQVHISEAR) form a coiled coil. A Rieske domain is found at 221–321 (WYPVAFTADL…CLEQEGMIWI (101 aa)). Residues Cys262, His264, Cys281, and His284 each contribute to the [2Fe-2S] cluster site. Asp360, Asp364, His367, and His372 together coordinate Fe cation.

It localises to the plastid. The protein resides in the chloroplast membrane. It is found in the chloroplast thylakoid membrane. The enzyme catalyses chlorophyllide a + 2 NADPH + 2 O2 + 2 H(+) = chlorophyllide b + 2 NADP(+) + 3 H2O. It functions in the pathway porphyrin-containing compound metabolism; chlorophyll biosynthesis. Functionally, catalyzes a two-step oxygenase reaction involved in the synthesis of chlorophyll b. Acts specifically on the non-esterified chlorophyllide a and not on chlorophyll a. This chain is Chlorophyllide a oxygenase, chloroplastic (CAO), found in Arabidopsis thaliana (Mouse-ear cress).